A 159-amino-acid chain; its full sequence is Phosphopantetheine adenylyltransferase (159 aa).

Thr10 is a binding site for substrate. Residues 10–11 and His18 contribute to the ATP site; that span reads TF. Residues Lys42, Met74, and Arg88 each contribute to the substrate site. Residues 89-91, Glu99, and 124-130 each bind ATP; these read GLR and WSFISSS.

The protein belongs to the bacterial CoaD family. Homohexamer. Mg(2+) is required as a cofactor.

It localises to the cytoplasm. It catalyses the reaction (R)-4'-phosphopantetheine + ATP + H(+) = 3'-dephospho-CoA + diphosphate. Its pathway is cofactor biosynthesis; coenzyme A biosynthesis; CoA from (R)-pantothenate: step 4/5. Its function is as follows. Reversibly transfers an adenylyl group from ATP to 4'-phosphopantetheine, yielding dephospho-CoA (dPCoA) and pyrophosphate. In Salmonella dublin (strain CT_02021853), this protein is Phosphopantetheine adenylyltransferase.